The following is a 464-amino-acid chain: tRNA(Ile)-lysidine synthase (464 aa).

26 to 31 provides a ligand contact to ATP; sequence SGGPDS.

The protein belongs to the tRNA(Ile)-lysidine synthase family.

It is found in the cytoplasm. It catalyses the reaction cytidine(34) in tRNA(Ile2) + L-lysine + ATP = lysidine(34) in tRNA(Ile2) + AMP + diphosphate + H(+). Functionally, ligates lysine onto the cytidine present at position 34 of the AUA codon-specific tRNA(Ile) that contains the anticodon CAU, in an ATP-dependent manner. Cytidine is converted to lysidine, thus changing the amino acid specificity of the tRNA from methionine to isoleucine. The chain is tRNA(Ile)-lysidine synthase from Geobacillus kaustophilus (strain HTA426).